Reading from the N-terminus, the 346-residue chain is UPF0425 pyridoxal phosphate-dependent protein MK0620 (346 aa).

At lysine 206 the chain carries N6-(pyridoxal phosphate)lysine.

Pyridoxal 5'-phosphate is required as a cofactor.

The protein is UPF0425 pyridoxal phosphate-dependent protein MK0620 of Methanopyrus kandleri (strain AV19 / DSM 6324 / JCM 9639 / NBRC 100938).